The sequence spans 588 residues: ATP-dependent lipid A-core flippase (588 aa).

A run of 6 helical transmembrane segments spans residues 23–43, 56–76, 141–161, 162–182, 257–277, and 278–298; these read FWPV…IDAG, FITI…IGIT, DALT…TVMM, VICW…GIIV, LVIA…STVI, and TISA…IKPM. Residues 28–310 enclose the ABC transmembrane type-1 domain; it reads LLGVLANILY…LTTLNATIQR (283 aa). The ABC transporter domain maps to 342–576; it reads IEFKHVYHAY…DGHYAQLYKV (235 aa). 375–382 lines the ATP pocket; that stretch reads GHSGSGKT.

It belongs to the ABC transporter superfamily. Lipid exporter (TC 3.A.1.106) family. In terms of assembly, homodimer.

The protein resides in the cell inner membrane. It catalyses the reaction ATP + H2O + lipid A-core oligosaccharideSide 1 = ADP + phosphate + lipid A-core oligosaccharideSide 2.. Functionally, involved in lipopolysaccharide (LPS) biosynthesis. Translocates lipid A-core from the inner to the outer leaflet of the inner membrane. Transmembrane domains (TMD) form a pore in the inner membrane and the ATP-binding domain (NBD) is responsible for energy generation. The polypeptide is ATP-dependent lipid A-core flippase (Legionella pneumophila (strain Lens)).